A 132-amino-acid polypeptide reads, in one-letter code: Ribosome-binding factor A (132 aa).

The protein belongs to the RbfA family. In terms of assembly, monomer. Binds 30S ribosomal subunits, but not 50S ribosomal subunits or 70S ribosomes.

The protein localises to the cytoplasm. Its function is as follows. One of several proteins that assist in the late maturation steps of the functional core of the 30S ribosomal subunit. Associates with free 30S ribosomal subunits (but not with 30S subunits that are part of 70S ribosomes or polysomes). Required for efficient processing of 16S rRNA. May interact with the 5'-terminal helix region of 16S rRNA. This is Ribosome-binding factor A from Treponema denticola (strain ATCC 35405 / DSM 14222 / CIP 103919 / JCM 8153 / KCTC 15104).